A 382-amino-acid chain; its full sequence is Opsin Rh5 (382 aa).

At 1–49 (MHINGPSGPQAYVNDSLGDGSVFPMGHGYPAEYQHMVHAHWRGFREAPI) the chain is on the extracellular side. Residue Asn-14 is glycosylated (N-linked (GlcNAc...) asparagine). A helical transmembrane segment spans residues 50 to 76 (YYHAGFYIAFIVLMLSSIFGNGLVIWI). Residues 77-88 (FSTSKSLRTPSN) are Cytoplasmic-facing. Residues 89–112 (LLILNLAIFDLFMCTNMPHYLINA) form a helical membrane-spanning segment. The Extracellular segment spans residues 113-127 (TVGYIVGGDLGCDIY). A disulfide bridge connects residues Cys-124 and Cys-201. Residues 128–147 (ALNGGISGMGASITNAFIAF) form a helical membrane-spanning segment. The Cytoplasmic portion of the chain corresponds to 148–165 (DRYKTISNPIDGRLSYGQ). A helical membrane pass occupies residues 166–190 (IVLLILFTWLWATPFSVLPLFQIWG). Topologically, residues 191 to 214 (RYQPEGFLTTCSFDYLTNTDENRL) are extracellular. Residues 215–242 (FVRTIFVWSYVIPMTMILVSYYKLFTHV) form a helical membrane-spanning segment. At 243–278 (RVHEKMLAEQAKKMNVKSLSANANADNMSVELRIAK) the chain is on the cytoplasmic side. Residues 279 to 302 (AALIIYMLFILAWTPYSVVALIGC) form a helical membrane-spanning segment. Residues 303–310 (FGEQQLIT) are Extracellular-facing. A helical transmembrane segment spans residues 311–335 (PFVSMLPCLACKSVSCLDPWVYATS). Position 322 is an N6-(retinylidene)lysine (Lys-322). Residues 336–382 (HPKYRLELERRLPWLGIREKHATSGTSGGQESVASVSGDTLALSVQN) are Cytoplasmic-facing. The segment at 357-382 (ATSGTSGGQESVASVSGDTLALSVQN) is disordered. A compositionally biased stretch (polar residues) spans 358–382 (TSGTSGGQESVASVSGDTLALSVQN).

It belongs to the G-protein coupled receptor 1 family. Opsin subfamily. In terms of processing, phosphorylated on some or all of the serine and threonine residues present in the C-terminal region. In terms of tissue distribution, expressed specifically in the retina. Each Drosophila eye is composed of 800 facets or ommatidia. Each ommatidium contains 8 photoreceptor cells (R1-R8), the R1 to R6 cells are outer cells, while R7 and R8 are inner cells. Rh5 is expressed only in R8 photoreceptor cells in a subset of ommatidia.

The protein localises to the cell projection. The protein resides in the rhabdomere membrane. Its function is as follows. Visual pigments are the light-absorbing molecules that mediate vision. They consist of an apoprotein, opsin, covalently linked to cis-retinal. The protein is Opsin Rh5 (Rh5) of Drosophila melanogaster (Fruit fly).